Here is a 358-residue protein sequence, read N- to C-terminus: Putative inhibitor of apoptosis (358 aa).

BIR repeat units follow at residues 4-70 (EKDR…CPFL) and 90-157 (YAAR…CEYL). Zn(2+) is bound by residues C127, C130, H147, and C154. One can recognise a CARD domain in the interval 193-283 (EPPNDLSLIR…MLYKHLFVQQ (91 aa)). The RING-type zinc-finger motif lies at 311–346 (CKVCMDKEVSIVFIPCGHLVVCKDCAPSLRKCPICR).

It belongs to the IAP family.

The protein is Putative inhibitor of apoptosis (PIAP) of Sus scrofa (Pig).